The sequence spans 662 residues: UPF0313 protein CPR_1216 (662 aa).

The 272-residue stretch at 296–567 (AIEEVKFSLV…AMQRALLQFK (272 aa)) folds into the Radical SAM core domain. Positions 310, 314, and 317 each coordinate [4Fe-4S] cluster. The tract at residues 597–662 (RDKNSFGKGN…QRVSKGKKRR (66 aa)) is disordered. Positions 618 to 632 (SRNENSGRRESEDKK) are enriched in basic and acidic residues. Residues 633-644 (RSSHSKKQRGNK) are compositionally biased toward basic residues.

The protein belongs to the UPF0313 family. Requires [4Fe-4S] cluster as cofactor.

This chain is UPF0313 protein CPR_1216, found in Clostridium perfringens (strain SM101 / Type A).